We begin with the raw amino-acid sequence, 134 residues long: Transcription antitermination protein NusB (134 aa).

The protein belongs to the NusB family.

Functionally, involved in transcription antitermination. Required for transcription of ribosomal RNA (rRNA) genes. Binds specifically to the boxA antiterminator sequence of the ribosomal RNA (rrn) operons. This is Transcription antitermination protein NusB from Shewanella sp. (strain W3-18-1).